An 806-amino-acid chain; its full sequence is U4/U6.U5 tri-snRNP-associated protein 1 (806 aa).

The tract at residues 1–121 (MGSSKKHRGE…SGDASSLSIE (121 aa)) is disordered. Positions 32–42 (HREHKKHKHRS) are enriched in basic residues. Basic and acidic residues predominate over residues 58 to 101 (ERGSERGSGRRGAEAEARSGAHGRERSQAEPSERRVKREKRDDG). Residues 104–119 (AAASSKASSGDASSLS) show a composition bias toward low complexity. Glycyl lysine isopeptide (Lys-Gly) (interchain with G-Cter in SUMO2) cross-links involve residues K125 and K133. Residue K141 forms a Glycyl lysine isopeptide (Lys-Gly) (interchain with G-Cter in SUMO1); alternate linkage. K141 is covalently cross-linked (Glycyl lysine isopeptide (Lys-Gly) (interchain with G-Cter in SUMO2); alternate). Glycyl lysine isopeptide (Lys-Gly) (interchain with G-Cter in SUMO2) cross-links involve residues K147 and K188. A coiled-coil region spans residues 157 to 231 (NPMALRQREE…KLLEEMDQEF (75 aa)). T189 is subject to Phosphothreonine. K277 is covalently cross-linked (Glycyl lysine isopeptide (Lys-Gly) (interchain with G-Cter in SUMO2)). Position 321 is a phosphoserine (S321). Glycyl lysine isopeptide (Lys-Gly) (interchain with G-Cter in SUMO2) cross-links involve residues K329 and K336. S348 is modified (phosphoserine). Glycyl lysine isopeptide (Lys-Gly) (interchain with G-Cter in SUMO2) cross-links involve residues K400 and K414. A disordered region spans residues 418–504 (MRADDLLPLG…GLEEDEAELE (87 aa)). T430 bears the Phosphothreonine mark. Residues 450–460 (VEEEALEDEEK) show a composition bias toward acidic residues. Phosphoserine occurs at positions 480, 492, and 527. Positions 494–540 (EGLEEDEAELELQKQLEKGRRLRQLQQLQQLRDSGEKVLEIVKKLES) form a coiled coil. A Glycyl lysine isopeptide (Lys-Gly) (interchain with G-Cter in SUMO2) cross-link involves residue K554. The disordered stretch occupies residues 578-610 (AGNREEQEELMDFERDEERSANGGSESDGEENI). Phosphoserine is present on residues S597, S602, S604, and S627. Residues K654, K663, and K690 each participate in a glycyl lysine isopeptide (Lys-Gly) (interchain with G-Cter in SUMO2) cross-link. T701 is subject to Phosphothreonine. Residues K705, K715, K729, K755, and K764 each participate in a glycyl lysine isopeptide (Lys-Gly) (interchain with G-Cter in SUMO2) cross-link. S767 carries the post-translational modification Phosphoserine. T770 is subject to Phosphothreonine. Glycyl lysine isopeptide (Lys-Gly) (interchain with G-Cter in SUMO2) cross-links involve residues K781 and K786. S795 is subject to Phosphoserine. K797 is covalently cross-linked (Glycyl lysine isopeptide (Lys-Gly) (interchain with G-Cter in SUMO2)).

It belongs to the SNU66/SART1 family. Identified in the spliceosome C complex. Component of the U4/U6-U5 tri-snRNP complex composed of the U4, U6 and U5 snRNAs and at least PRPF3, PRPF4, PRPF6, PRPF8, PRPF31, SNRNP200, TXNL4A, SNRNP40, DDX23, CD2BP2, PPIH, SNU13, EFTUD2, SART1 and USP39. Interacts with UBL5. Interacts with IVNS1ABP (via Kelch repeats). Sumoylated with SUMO2. In terms of tissue distribution, ubiquitously expressed. Shows a high expression in fetal liver and a low expression in adult liver.

It is found in the nucleus. Functionally, plays a role in mRNA splicing as a component of the U4/U6-U5 tri-snRNP, one of the building blocks of the spliceosome. May also bind to DNA. The protein is U4/U6.U5 tri-snRNP-associated protein 1 (Sart1) of Mus musculus (Mouse).